The primary structure comprises 116 residues: HTH-type transcriptional regulator AnsR (116 aa).

An HTH cro/C1-type domain is found at 6–60; sequence LTELRKKKNWSLQYTADLLGIAKSTYAGYESGYRRPSLEALAMLADLFDTTCDEL. The segment at residues 17–36 is a DNA-binding region (H-T-H motif); the sequence is LQYTADLLGIAKSTYAGYES.

In terms of biological role, transcriptional repressor for the ans operon coding for L-asparaginase and L-aspartase. NH4(+) may influence this repression. The polypeptide is HTH-type transcriptional regulator AnsR (ansR) (Bacillus subtilis (strain 168)).